Here is a 434-residue protein sequence, read N- to C-terminus: DNA primase large subunit PriL (434 aa).

Residues Cys281, Cys392, Cys403, and Cys409 each contribute to the [4Fe-4S] cluster site.

Belongs to the eukaryotic-type primase large subunit family. As to quaternary structure, heterodimer of a small subunit (PriS) and a large subunit (PriL). [4Fe-4S] cluster is required as a cofactor.

Regulatory subunit of DNA primase, an RNA polymerase that catalyzes the synthesis of short RNA molecules used as primers for DNA polymerase during DNA replication. Stabilizes and modulates the activity of the small subunit, increasing the rate of DNA synthesis, and conferring RNA synthesis capability. The DNA polymerase activity may enable DNA primase to also catalyze primer extension after primer synthesis. May also play a role in DNA repair. This Methanothermobacter thermautotrophicus (strain ATCC 29096 / DSM 1053 / JCM 10044 / NBRC 100330 / Delta H) (Methanobacterium thermoautotrophicum) protein is DNA primase large subunit PriL.